Consider the following 308-residue polypeptide: uncharacterized protein (308 aa).

Positions 1–18 (MKIILLFLAALASFTVHA) are cleaved as a signal peptide.

This is an uncharacterized protein from Escherichia coli (strain K12).